Reading from the N-terminus, the 158-residue chain is Transcriptional repressor NrdR (158 aa).

A zinc finger spans residues cysteine 3–cysteine 34. The region spanning leucine 49–serine 139 is the ATP-cone domain.

This sequence belongs to the NrdR family. Zn(2+) is required as a cofactor.

Functionally, negatively regulates transcription of bacterial ribonucleotide reductase nrd genes and operons by binding to NrdR-boxes. The chain is Transcriptional repressor NrdR from Desulforamulus reducens (strain ATCC BAA-1160 / DSM 100696 / MI-1) (Desulfotomaculum reducens).